A 93-amino-acid chain; its full sequence is UPF0223 protein YfdD (93 aa).

This sequence belongs to the UPF0223 family.

This is UPF0223 protein YfdD (yfdD) from Lactococcus lactis subsp. lactis (strain IL1403) (Streptococcus lactis).